The sequence spans 324 residues: Probable carboxylesterase 9 (324 aa).

The Involved in the stabilization of the negatively charged intermediate by the formation of the oxyanion hole motif lies at 86-88 (HGS). Active-site residues include serine 171, aspartate 272, and histidine 302.

This sequence belongs to the 'GDXG' lipolytic enzyme family. Expressed in flowers.

It catalyses the reaction a carboxylic ester + H2O = an alcohol + a carboxylate + H(+). In terms of biological role, carboxylesterase acting on esters with varying acyl chain length. This Arabidopsis thaliana (Mouse-ear cress) protein is Probable carboxylesterase 9 (CXE9).